The following is a 278-amino-acid chain: Tryptophan synthase alpha chain (278 aa).

Active-site proton acceptor residues include E49 and D60.

Belongs to the TrpA family. Tetramer of two alpha and two beta chains.

It carries out the reaction (1S,2R)-1-C-(indol-3-yl)glycerol 3-phosphate + L-serine = D-glyceraldehyde 3-phosphate + L-tryptophan + H2O. It functions in the pathway amino-acid biosynthesis; L-tryptophan biosynthesis; L-tryptophan from chorismate: step 5/5. The alpha subunit is responsible for the aldol cleavage of indoleglycerol phosphate to indole and glyceraldehyde 3-phosphate. The chain is Tryptophan synthase alpha chain from Psychrobacter arcticus (strain DSM 17307 / VKM B-2377 / 273-4).